A 451-amino-acid chain; its full sequence is Phosphoglucosamine mutase (451 aa).

Catalysis depends on Ser102, which acts as the Phosphoserine intermediate. Ser102, Asp243, Asp245, and Asp247 together coordinate Mg(2+). Ser102 is subject to Phosphoserine.

It belongs to the phosphohexose mutase family. The cofactor is Mg(2+). Post-translationally, activated by phosphorylation.

It catalyses the reaction alpha-D-glucosamine 1-phosphate = D-glucosamine 6-phosphate. Its function is as follows. Catalyzes the conversion of glucosamine-6-phosphate to glucosamine-1-phosphate. In Brucella abortus (strain 2308), this protein is Phosphoglucosamine mutase.